Here is a 903-residue protein sequence, read N- to C-terminus: Glutamate receptor ionotropic, NMDA 1 (903 aa).

Positions 1-20 are cleaved as a signal peptide; the sequence is MGTMRLFLLAVLFLFSFARA. At 21 to 557 the chain is on the extracellular side; that stretch reads GCDPKIVNIG…TLDSFMQPFQ (537 aa). N-linked (GlcNAc...) asparagine glycosylation is found at Asn61, Asn203, Asn276, Asn300, Asn350, Asn368, Asn440, Asn469, and Asn489. A disulfide bridge connects residues Cys79 and Cys308. 2 disulfides stabilise this stretch: Cys420-Cys452 and Cys436-Cys453. Positions 514, 516, and 521 each coordinate glycine. Residues 558–578 traverse the membrane as a helical segment; sequence STLWLLVGLSVHVVAVMLYLL. Over 579–600 the chain is Cytoplasmic; it reads DRFSPFGRFKVNSEEEEEDALT. The tract at residues 601-620 is pore-forming; the sequence is LSSAMWFSWGVLLNSGIGEG. The segment at residues 601–622 is an intramembrane region (discontinuously helical); sequence LSSAMWFSWGVLLNSGIGEGAP. At 623 to 628 the chain is on the cytoplasmic side; the sequence is RSFSAR. A helical membrane pass occupies residues 629–645; it reads ILGMVWAGFAMIIVASY. Topologically, residues 646-810 are extracellular; it reads TANLAAFLVL…NAPATLTFEN (165 aa). Positions 686 and 730 each coordinate glycine. Cysteines 742 and 796 form a disulfide. A glycan (N-linked (GlcNAc...) asparagine) is linked at Asn769. The helical transmembrane segment at 811–831 threads the bilayer; sequence MAGVFMLVAGGIVAGIFLIFI. Residues 832–903 are Cytoplasmic-facing; sequence EIAYKRHKDA…SSKDTVNVVV (72 aa).

It belongs to the glutamate-gated ion channel (TC 1.A.10.1) family. NR1/GRIN1 subfamily. Heterotetramer; the NMDAR subunits are modular and harbor tiered domains that function in concert to regulate opening and closing of the cation-selective ion channel pore. Forms heterotetrameric channels composed of two GluN1/zeta subunits (GRIN1), and two identical GluN2/epsilon subunits (GRIN2A, GRIN2B, GRIN2C or GRIN2D) or GluN3 subunits (GRIN3A or GRIN3B) (in vitro). Does not form functional channels by itself. Can also form heterotetrameric channels that contain at least two GluN1 subunits and at least two different GluN2 subunits (or a combination of one GluN2 and one GluN3 subunits) (in vitro). In vivo, the subunit composition may vary in function of the expression levels of the different subunits.

It localises to the cell membrane. The protein localises to the postsynaptic cell membrane. The protein resides in the postsynaptic density membrane. Its subcellular location is the synaptic cell membrane. The enzyme catalyses Ca(2+)(in) = Ca(2+)(out). It catalyses the reaction Na(+)(in) = Na(+)(out). The catalysed reaction is K(+)(in) = K(+)(out). Its activity is regulated as follows. NMDA glutamate receptor activity is modulated by zinc ions. The NMDA glutamate receptor activity of the heterotetramer with grin2b is stimulated by micromolar levels of Zn(2+). The NMDA glutamate receptor activity of the heterotetramer with grin2a is inhibited by nanomolar levels of Zn(2+). Component of N-methyl-D-aspartate (NMDA) receptors (NMDARs) that function as heterotetrameric, ligand-gated cation channels with high calcium permeability and voltage-dependent block by Mg(2+). NMDARs participate in synaptic plasticity. Channel activation requires binding of the neurotransmitter L-glutamate to the GluN2 subunit, glycine binding to the GluN1 subunit, plus membrane depolarization to eliminate channel inhibition by Mg(2+). NMDARs mediate simultaneously the potasium efflux and the influx of calcium and sodium. Each GluN2 or GluN3 subunit confers differential attributes to channel properties, including activation, deactivation and desensitization kinetics, pH sensitivity, Ca2(+) permeability, and binding to allosteric modulators. This chain is Glutamate receptor ionotropic, NMDA 1, found in Xenopus laevis (African clawed frog).